Here is a 417-residue protein sequence, read N- to C-terminus: MFADLGYDIEEDKLGIPTVPGKVTLQKDAQNLIGISIGGGAQYCPCLYIVQVFDNTPAALDGTVAAGDEITGVNGRSIKGKTKVEVAKMIQEVKGEVTIHYNKLQADPKQGMSLDIVLKKVKHRLVENMSSGTADALGLSRAILCNDGLVKRLEELERTAELYKGMTEHTKNLLRAFYELSQTHRAFGDVFSVIGVREPQPAASEAFVKFADAHRSIEKFGIRLLKTIKPMLTDLNTYLNKAIPDTRLTIKKYLDVKFEYLSYCLKVKEMDDEEYSCIALGEPLYRVSTGNYEYRLILRCRQEARARFSQMRKDVLEKMELLDQEHVQDIVLQLQRFVSTMSKYYNDCYSVLRDADVFPIEVDLAHTTLAYGLSQDEFTDGEDEEDEDEEDTAAGEPPRDSRGAAGPLDKGGSWCNS.

The PDZ domain occupies 22–105 (KVTLQKDAQN…EVTIHYNKLQ (84 aa)). Zn(2+) is bound by residues cysteine 44 and cysteine 46. Position 82 is a phosphothreonine (threonine 82). Residues 144–357 (LCNDGLVKRL…CYSVLRDADV (214 aa)) form the AH domain. The disordered stretch occupies residues 375-417 (QDEFTDGEDEEDEDEEDTAAGEPPRDSRGAAGPLDKGGSWCNS). Positions 377 to 393 (EFTDGEDEEDEDEEDTA) are enriched in acidic residues. Cysteine 415 carries the S-palmitoyl cysteine; by DHHC8 lipid modification.

As to quaternary structure, monomer and homodimer. Interacts with CXADR. Interacts presynaptically with the glutamate receptors GRIA2, GRIA3, GRIK3, isoform 3 of GRIA4, isoform A of GRM4, GRM7 and GRM8; with NAPA and NAPB; and with BTG2. The interaction with NAPA and NAPB disrupts the interaction with GRIA2, conducting to the internalization of GRIA2. Interacts with PRKCA; with the amine transporters SLC6A2 and SLC6A3; with the channels ASIC1 and ASIC2; with the GTP-binding proteins ARF1 and ARF3; with the ephrin receptor tyrosine kinases EPHA7, EPHB1 and EPHB2; with ERBB2 and through its PDZ domain with the C-terminal tail of PRLHR. Interacts with UNC5A. Interacts (via AH domain) with NCS1/FREQ; in a calcium-dependent manner. Interacts with F-actin and associates with the ARP2/3 complex. Interacts (via PDZ domain) with ARF1 (activated); the interaction blocks Arp2/3 complex inhibition. Interacts with SORCS3. In terms of processing, phosphorylation at Thr-82 appears to inhibit the interaction with AMPA receptors. Palmitoylation on Cys-415 is essential for long-term synaptic depression (LTD).

Its subcellular location is the cytoplasm. It is found in the perinuclear region. The protein resides in the membrane. The protein localises to the postsynaptic density. It localises to the synapse. Its subcellular location is the synaptosome. It is found in the cytoskeleton. Probable adapter protein that bind to and organize the subcellular localization of a variety of membrane proteins containing some PDZ recognition sequence. Involved in the clustering of various receptors, possibly by acting at the receptor internalization level. Plays a role in synaptic plasticity by regulating the trafficking and internalization of AMPA receptors. May be regulated upon PRKCA activation. May regulate ASIC1/ASIC3 channel. Regulates actin polymerization by inhibiting the actin-nucleating activity of the Arp2/3 complex; the function is competitive with nucleation promoting factors and is linked to neuronal morphology regulation and AMPA receptor (AMPAR) endocytosis. Via interaction with the Arp2/3 complex involved in regulation of synaptic plasicity of excitatory synapses and required for spine shrinkage during long-term depression (LTD). Involved in regulation of astrocyte morphology, antagonistic to Arp2/3 complex activator WASL/N-WASP function. The chain is PRKCA-binding protein (PICK1) from Bos taurus (Bovine).